We begin with the raw amino-acid sequence, 693 residues long: Elongation factor G (693 aa).

Residues Glu8–Leu282 enclose the tr-type G domain. GTP contacts are provided by residues Ala17–Thr24, Asp81–His85, and Asn135–Asp138.

Belongs to the TRAFAC class translation factor GTPase superfamily. Classic translation factor GTPase family. EF-G/EF-2 subfamily.

Its subcellular location is the cytoplasm. Catalyzes the GTP-dependent ribosomal translocation step during translation elongation. During this step, the ribosome changes from the pre-translocational (PRE) to the post-translocational (POST) state as the newly formed A-site-bound peptidyl-tRNA and P-site-bound deacylated tRNA move to the P and E sites, respectively. Catalyzes the coordinated movement of the two tRNA molecules, the mRNA and conformational changes in the ribosome. This is Elongation factor G from Staphylococcus aureus (strain Newman).